Reading from the N-terminus, the 660-residue chain is DNA mismatch repair protein MutL (660 aa).

It belongs to the DNA mismatch repair MutL/HexB family.

This protein is involved in the repair of mismatches in DNA. It is required for dam-dependent methyl-directed DNA mismatch repair. May act as a 'molecular matchmaker', a protein that promotes the formation of a stable complex between two or more DNA-binding proteins in an ATP-dependent manner without itself being part of a final effector complex. The polypeptide is DNA mismatch repair protein MutL (Streptococcus pyogenes serotype M1).